The chain runs to 340 residues: Trimethylamine N-oxide transport system ATP-binding protein TmoW (340 aa).

An ABC transporter domain is found at 32 to 268; the sequence is GRSFDDIRAD…PTTGYVAKFT (237 aa). Residue 64-71 coordinates ATP; that stretch reads GLSGSGKS.

Belongs to the ABC transporter superfamily. The complex is probably composed of two ATP-binding proteins (TmoW), two transmembrane proteins (TmoV) and a solute-binding protein (TmoX).

It is found in the cell inner membrane. The catalysed reaction is a quaternary ammonium(out) + ATP + H2O = a quaternary ammonium(in) + ADP + phosphate + H(+). In terms of biological role, part of the ABC transporter complex TmoXWV involved in trimethylamine N-oxide (TMAO) import. Responsible for energy coupling to the transport system. Is specific for TMAO and essential for TMAO metabolism. In Ruegeria pomeroyi (strain ATCC 700808 / DSM 15171 / DSS-3) (Silicibacter pomeroyi), this protein is Trimethylamine N-oxide transport system ATP-binding protein TmoW.